A 367-amino-acid chain; its full sequence is N-acetylmuramoyl-L-alanine amidase BlyA (367 aa).

An N-acetylmuramoyl-L-alanine amidase domain is found at 24-158 (VKKCVLHYTA…DITHKNCPAP (135 aa)). Residues 178 to 204 (SGKSVSKASPTKPTTSSPSSSSAVSGS) form a disordered region. Residues 180–204 (KSVSKASPTKPTTSSPSSSSAVSGS) are compositionally biased toward low complexity. 2 consecutive SH3b domains span residues 202 to 271 (SGSL…YVDV) and 298 to 367 (GKIK…GSTI).

Belongs to the N-acetylmuramoyl-L-alanine amidase 2 family.

It localises to the secreted. The catalysed reaction is Hydrolyzes the link between N-acetylmuramoyl residues and L-amino acid residues in certain cell-wall glycopeptides.. In terms of biological role, autolysins are involved in some important biological processes such as cell separation, cell-wall turnover, competence for genetic transformation, formation of the flagella and sporulation. Involved in prophage SP-beta-mediated cell lysis. The polypeptide is N-acetylmuramoyl-L-alanine amidase BlyA (blyA) (Bacillus subtilis (strain 168)).